Consider the following 147-residue polypeptide: Myosin-ID light chain (147 aa).

EF-hand domains lie at 8–43 (EAQS…LGQN), 79–114 (FDEK…LGER), and 115–147 (LPEE…MLKK). Residues Asp21, Asn23, Asp25, Lys27, and Glu32 each coordinate Ca(2+).

As to quaternary structure, myosin I is a dimer of a heavy and a light chain. Inability to self-assemble into filaments. Interacts with myoD. Does not interact with myoB or myoC.

It localises to the cytoplasm. Functionally, functions as the light chain for myosin-D. Has low affinity for calcium. This is Myosin-ID light chain (mlcD) from Dictyostelium discoideum (Social amoeba).